The chain runs to 306 residues: OVARIAN TUMOR DOMAIN-containing deubiquitinating enzyme 1 (306 aa).

In terms of domain architecture, OTU spans 81–295 (IGIRRTRGDG…PGHYDILYPK (215 aa)). Asp89 is an active-site residue. Cys92 serves as the catalytic Nucleophile. Catalysis depends on residues His259 and His288.

It belongs to the peptidase C65 family.

It carries out the reaction Thiol-dependent hydrolysis of ester, thioester, amide, peptide and isopeptide bonds formed by the C-terminal Gly of ubiquitin (a 76-residue protein attached to proteins as an intracellular targeting signal).. Cleavage activities for 'Lys-48'- and 'Lys-63'-linked ubiquitin (UB) tetramers is inhibited by UB aldehyde and N-ethylmaleimide but not by the metalloprotease inhibitors 1,10-phenanthroline and EDTA, and the serine protease inhibitor phenylmethylsulfonyl fluoride. Hydrolase that can remove conjugated ubiquitin from proteins in vitro and may therefore play an important regulatory role at the level of protein turnover by preventing degradation. Cysteine protease with a preference for Met-1 and 'Lys-48' over 'Lys-63'-linked ubiquitin (UB) tetramers (e.g. Ub2, Ub3 and Ub4) as substrates. This chain is OVARIAN TUMOR DOMAIN-containing deubiquitinating enzyme 1, found in Arabidopsis thaliana (Mouse-ear cress).